The chain runs to 586 residues: Heterogeneous nuclear ribonucleoprotein L (586 aa).

The span at 1–16 (MSRRLLPRAEKRRRRL) shows a compositional bias: basic residues. The segment at 1 to 97 (MSRRLLPRAE…NYDDPHKTPA (97 aa)) is disordered. The segment covering 17 to 27 (EQRQQPDEQLR) has biased composition (basic and acidic residues). Over residues 28–37 (RAGAMVKMAA) the composition is skewed to low complexity. Residues 38–54 (AGGGGGGGRYYGGGNEG) are compositionally biased toward gly residues. Residues Lys59 and Lys62 each participate in a glycyl lysine isopeptide (Lys-Gly) (interchain with G-Cter in SUMO2) cross-link. Residues 69 to 87 (QHGGGGGGGSGAAGGGGGE) are compositionally biased toward gly residues. At Ser98 the chain carries Phosphoserine. Residues 99–173 (PVVHIRGLID…HPAFVNYSTS (75 aa)) enclose the RRM 1 domain. A Glycyl lysine isopeptide (Lys-Gly) (interchain with G-Cter in SUMO2) cross-link involves residue Lys133. Residue Ser182 is modified to Phosphoserine. The RRM 2 domain maps to 190–267 (SVLLFTILNP…CTLKIEYAKP (78 aa)). Position 266 is an N6-acetyllysine (Lys266). Polar residues predominate over residues 281–298 (DYTNPNLSGQGDPGSNPN). The disordered stretch occupies residues 281-376 (DYTNPNLSGQ…PPPPDYGPHA (96 aa)). A phosphoserine mark is found at Ser288 and Ser295. Lys299 participates in a covalent cross-link: Glycyl lysine isopeptide (Lys-Gly) (interchain with G-Cter in SUMO2). Residues Arg351 and Arg355 each carry the asymmetric dimethylarginine modification. The span at 361 to 372 (GHPPPPPPPPDY) shows a compositional bias: pro residues. A Phosphoserine modification is found at Ser378. 2 RRM domains span residues 379 to 476 (PVLM…DFSE) and 492 to 580 (RIQH…LCFS). At Ser541 the chain carries Phosphoserine; by CaMK4. A Glycyl lysine isopeptide (Lys-Gly) (interchain with G-Cter in SUMO2) cross-link involves residue Lys565.

Identified in a IGF2BP1-dependent mRNP granule complex containing untranslated mRNAs. Interacts with HNRNPLL. Interacts with APEX1; the interaction is DNA-dependent. Component of a complex with SETD2. Interacts with ELAVL1. Part of a transcription inhibitory ribonucleoprotein complex composed at least of the circular RNA circZNF827, ZNF827 and HNRNPK. Interacts with CHD8 in an RNA-dependent manner. Phosphorylation at Ser-541 by CaMK4 enhances interaction with a CaMK4-responsive RNA element (CaRRE1), and prevents inclusion of the stress axis-regulated exon (STREX) of the KCNMA1 potassium channel transcripts upon membrane depolarization. In terms of tissue distribution, detected in hematopoietic cells, including lymphoid progenitor cells.

It localises to the nucleus. It is found in the nucleoplasm. The protein resides in the cytoplasm. Its function is as follows. Splicing factor binding to exonic or intronic sites and acting as either an activator or repressor of exon inclusion. Exhibits a binding preference for CA-rich elements. Component of the heterogeneous nuclear ribonucleoprotein (hnRNP) complexes and associated with most nascent transcripts. Associates, together with APEX1, to the negative calcium responsive element (nCaRE) B2 of the APEX2 promoter. As part of a ribonucleoprotein complex composed at least of ZNF827, HNRNPK and the circular RNA circZNF827 that nucleates the complex on chromatin, may negatively regulate the transcription of genes involved in neuronal differentiation. Regulates alternative splicing of a core group of genes involved in neuronal differentiation, likely by mediating H3K36me3-coupled transcription elongation and co-transcriptional RNA processing via interaction with CHD8. The chain is Heterogeneous nuclear ribonucleoprotein L (Hnrnpl) from Mus musculus (Mouse).